Reading from the N-terminus, the 1287-residue chain is Vacuolating cytotoxin autotransporter (1287 aa).

An N-terminal signal peptide occupies residues 1–33; the sequence is MEIQQTHRKINRPLVSLALVGALVSITPQQSHA. The interval 326 to 381 is disordered; it reads PPEGGYKDKPNNTPSQSGAKNDKQESSQNNSNTQVINPPNSTQKTEVQPTQVIDGP. The segment covering 351–376 has biased composition (polar residues); sequence SSQNNSNTQVINPPNSTQKTEVQPTQ. The region spanning 1014–1287 is the Autotransporter domain; sequence KYEKPTNVWA…ASNLGMRYSF (274 aa).

It is found in the periplasm. The protein localises to the secreted. It localises to the cell surface. The protein resides in the cell outer membrane. Its function is as follows. Induces vacuolation of eukaryotic cells. Causes ulceration and gastric lesions. The chain is Vacuolating cytotoxin autotransporter (vacA) from Helicobacter pylori (Campylobacter pylori).